The chain runs to 409 residues: Putative fatty acyl-CoA reductase 7 (409 aa).

This sequence belongs to the fatty acyl-CoA reductase family.

The protein is Putative fatty acyl-CoA reductase 7 (FAR7) of Arabidopsis thaliana (Mouse-ear cress).